The chain runs to 695 residues: Electrogenic aspartate/glutamate antiporter Aralar, mitochondrial (695 aa).

The tract at residues 1 to 310 is N-terminal domain; sequence MPMHIPFPFN…DYSDLSNIAP (310 aa). Topologically, residues 2-345 are mitochondrial intermembrane; the sequence is PMHIPFPFNW…FIQVLESSYR (344 aa). EF-hand domains are found at residues 71–104, 105–140, 142–175, and 176–211; these read FNDE…GLLC, TPDA…TELH, KIPF…LLHD, and FHEE…VKRH. Aspartate 84, serine 86, aspartate 88, leucine 90, glutamate 95, aspartate 118, asparagine 122, threonine 124, and aspartate 129 together coordinate Ca(2+). 3 residues coordinate Ca(2+): aspartate 189, threonine 193, and aspartate 200. The linker loop domain stretch occupies residues 311–327; it reads EHYTKHMTHRLAEIKAV. Residues 336–627 are carrier domain; sequence FIQVLESSYR…RLFYVDFGGT (292 aa). 3 Solcar repeats span residues 340 to 431, 439 to 523, and 531 to 619; these read LESS…VRDK, IPTW…TKAM, and NHPL…LQRL. The chain crosses the membrane as a helical span at residues 346–363; that stretch reads FTLGSFAGAVGATVVYPI. Over 364 to 405 the chain is Mitochondrial matrix; it reads DLVKTRMQNQRAGSYIGEVAYRNSWDCFKKVVRHEGFMGLYR. A helical transmembrane segment spans residues 406–425; the sequence is GLLPQLMGVAPEKAIKLTVN. The Mitochondrial intermembrane segment spans residues 426 to 448; sequence DLVRDKLTDKKGNIPTWAEVLAG. The chain crosses the membrane as a helical span at residues 449-462; the sequence is GCAGASQVVFTNPL. The Mitochondrial matrix portion of the chain corresponds to 463-497; sequence EIVKIRLQVAGEIASGSKIRAWSVVRELGLFGLYK. Residues 498 to 517 traverse the membrane as a helical segment; the sequence is GARACLLRDVPFSAIYFPTY. Residues 518–536 are Mitochondrial intermembrane-facing; the sequence is AHTKAMMADKDGYNHPLTL. Residues 537-554 form a helical membrane-spanning segment; sequence LAAGAIAGVPAASLVTPA. Residues 555-593 are Mitochondrial matrix-facing; sequence DVIKTRLQVVARSGQTTYTGVWDATKKIMAEEGPRAFWK. The helical transmembrane segment at 594–613 threads the bilayer; the sequence is GTAARVFRSSPQFGVTLVTY. The Mitochondrial intermembrane portion of the chain corresponds to 614 to 695; it reads ELLQRLFYVD…AASPSTATGS (82 aa). A C-terminal domain region spans residues 628–695; it reads QPKGSEAHKI…AASPSTATGS (68 aa).

This sequence belongs to the mitochondrial carrier (TC 2.A.29) family. As to quaternary structure, homodimer (via N-terminus). Ca(2+) is required as a cofactor. In terms of tissue distribution, expressed throughout the body in both males and females, including in ovaries and testes. As to expression, specifically expressed in female ovaries. Expressed throughout the body in both males and females but absent from ovaries and testes.

The protein resides in the mitochondrion inner membrane. The enzyme catalyses L-aspartate(in) + L-glutamate(out) + H(+)(out) = L-aspartate(out) + L-glutamate(in) + H(+)(in). It carries out the reaction 3-sulfino-L-alanine(out) + L-glutamate(in) + H(+)(in) = 3-sulfino-L-alanine(in) + L-glutamate(out) + H(+)(out). It catalyses the reaction L-2-aminoadipate(in) + L-glutamate(out) + H(+)(out) = L-2-aminoadipate(out) + L-glutamate(in) + H(+)(in). The catalysed reaction is L-glutamine(in) + L-glutamate(out) + Na(+)(out) + H(+)(out) = L-glutamine(out) + L-glutamate(in) + Na(+)(in) + H(+)(in). Its activity is regulated as follows. Activated by Ca(2+). Inhibited by p-chloromercuribenzoate, pyrocarbonate, mersalyl, tannic acid and N-ethylmaleimide. Its function is as follows. Mitochondrial electrogenic aspartate/glutamate antiporter that favors efflux of aspartate and entry of glutamate and proton within the mitochondria as part of the malate-aspartate shuttle. Also mediates the exchange of L-cysteinesulfinate (3-sulfino-L-alanine) for L-glutamate. Necessary for gamma-aminobutyric acid (GABA) uptake in brain mitochondria in response to increased mitochondrial membrane polarization; does not possess detectable GABA transport activity but role may be indirect. Possesses transport activity towards L-aspartate, L-glutamate and L-cysteinesulfinate (3-sulfino-L-alanine). L-glutamine transport activity is undetectable. GABA transport activity is undetectable. In terms of biological role, possesses transport activity towards L-aspartate, L-glutamate and L-cysteinesulfinate (3-sulfino-L-alanine). Has a wider substrate specificity range that includes L-2-aminoadipate and L-glutamine. GABA transport activity is undetectable. In Drosophila melanogaster (Fruit fly), this protein is Electrogenic aspartate/glutamate antiporter Aralar, mitochondrial.